Consider the following 441-residue polypeptide: Endothelin receptor type B (441 aa).

An N-terminal signal peptide occupies residues 1-26 (MQPPPSLCGLALLALVLACGMAEVWG). Topologically, residues 27 to 100 (EEREMPSAPA…RPTEIKDTFK (74 aa)) are extracellular. Positions 30–90 (EMPSAPATPP…APRRTPPPCQ (61 aa)) are disordered. Positions 47 to 65 (LTPSTKTSWPRDSNASLPR) are enriched in polar residues. N-linked (GlcNAc...) asparagine glycosylation occurs at asparagine 60. A helical membrane pass occupies residues 101–125 (YINTVVSCLVFVLGIIGNSTLLRII). The Cytoplasmic portion of the chain corresponds to 126-136 (YKNKCMRNGPN). The helical transmembrane segment at 137–162 (ILIASLALGDLLHIIIDIPINVYKLL) threads the bilayer. At 163–174 (AEDWPFGAEMCK) the chain is on the extracellular side. A disulfide bond links cysteine 173 and cysteine 254. The chain crosses the membrane as a helical span at residues 175–196 (LVPFIQKASVGITVLSLCALSI). The Cytoplasmic segment spans residues 197 to 217 (DRYRAVASWSRIKGIGVPKWT). Residues 218–242 (AVEIVLIWVVSVILAVPEAIGFNLV) traverse the membrane as a helical segment. Residues 243–270 (TIDYKGSYLRICLLNPTQKTAFMQFYKT) are Extracellular-facing. A helical membrane pass occupies residues 271–295 (AKDWWLFSFYFCLPLAITAFFYTLM). The Cytoplasmic segment spans residues 296–323 (TCEMLRKKSGMQIALNDHLKQRREVAKT). Position 304 is a phosphoserine (serine 304). A helical transmembrane segment spans residues 324–349 (VFCLVLVFGLCWLALHLSRILKLTLY). At 350 to 361 (DQNDPNRCELLS) the chain is on the extracellular side. A helical membrane pass occupies residues 362-388 (FLLVLDYIGINMASLNSCINPIALYLV). Residues 389–441 (SKRFKNCFKSCLCCWCQSFEEKQSLEEKQSCLKFKANDHGYDNFRSSNKYSSS) are Cytoplasmic-facing. S-palmitoyl cysteine attachment occurs at residues cysteine 402 and cysteine 404. Phosphoserine is present on serine 418. Phosphotyrosine is present on tyrosine 438. 3 positions are modified to phosphoserine: serine 439, serine 440, and serine 441.

The protein belongs to the G-protein coupled receptor 1 family. Endothelin receptor subfamily. EDNRB sub-subfamily.

The protein resides in the cell membrane. Non-specific receptor for endothelin 1, 2, and 3. Mediates its action by association with G proteins that activate a phosphatidylinositol-calcium second messenger system. The sequence is that of Endothelin receptor type B (EDNRB) from Oryctolagus cuniculus (Rabbit).